A 311-amino-acid chain; its full sequence is Serine/threonine-protein phosphatase 4 catalytic subunit A (311 aa).

The Mn(2+) site is built by Asp58, His60, Asp86, and Asn118. Residue His119 is the Proton donor of the active site. The Mn(2+) site is built by His168 and His242. Leu311 bears the Leucine methyl ester mark.

Belongs to the PPP phosphatase family. PP-4 (PP-X) subfamily. In terms of assembly, serine/threonine-protein phosphatase 4 (PP4) occurs in different assemblies of the catalytic and one or more regulatory subunits. Requires Mn(2+) as cofactor.

It is found in the cytoplasm. The protein localises to the cytoskeleton. Its subcellular location is the microtubule organizing center. It localises to the centrosome. The catalysed reaction is O-phospho-L-seryl-[protein] + H2O = L-seryl-[protein] + phosphate. The enzyme catalyses O-phospho-L-threonyl-[protein] + H2O = L-threonyl-[protein] + phosphate. Protein phosphatase that regulates many processes such as microtubule organization at centrosomes. The polypeptide is Serine/threonine-protein phosphatase 4 catalytic subunit A (ppp4ca) (Danio rerio (Zebrafish)).